We begin with the raw amino-acid sequence, 269 residues long: Tryptophan synthase alpha chain (269 aa).

Residues Glu49 and Asp60 each act as proton acceptor in the active site.

The protein belongs to the TrpA family. As to quaternary structure, tetramer of two alpha and two beta chains.

It carries out the reaction (1S,2R)-1-C-(indol-3-yl)glycerol 3-phosphate + L-serine = D-glyceraldehyde 3-phosphate + L-tryptophan + H2O. The protein operates within amino-acid biosynthesis; L-tryptophan biosynthesis; L-tryptophan from chorismate: step 5/5. In terms of biological role, the alpha subunit is responsible for the aldol cleavage of indoleglycerol phosphate to indole and glyceraldehyde 3-phosphate. This is Tryptophan synthase alpha chain from Acidovorax sp. (strain JS42).